The primary structure comprises 84 residues: UPF0473 protein CLI_2624 (84 aa).

It belongs to the UPF0473 family.

This chain is UPF0473 protein CLI_2624, found in Clostridium botulinum (strain Langeland / NCTC 10281 / Type F).